Here is a 432-residue protein sequence, read N- to C-terminus: Adenylosuccinate synthetase (432 aa).

GTP contacts are provided by residues 12 to 18 (GDEGKGK) and 40 to 42 (GHT). Aspartate 13 functions as the Proton acceptor in the catalytic mechanism. Mg(2+)-binding residues include aspartate 13 and glycine 40. Residues 13-16 (DEGK), 38-41 (NAGH), threonine 129, arginine 143, glutamine 224, threonine 239, and arginine 303 contribute to the IMP site. Histidine 41 (proton donor) is an active-site residue. 299–305 (VTTGRRR) lines the substrate pocket. GTP contacts are provided by residues arginine 305, 331-333 (KLD), and 413-415 (GVG).

This sequence belongs to the adenylosuccinate synthetase family. Homodimer. Mg(2+) is required as a cofactor.

The protein localises to the cytoplasm. The catalysed reaction is IMP + L-aspartate + GTP = N(6)-(1,2-dicarboxyethyl)-AMP + GDP + phosphate + 2 H(+). The protein operates within purine metabolism; AMP biosynthesis via de novo pathway; AMP from IMP: step 1/2. In terms of biological role, plays an important role in the de novo pathway of purine nucleotide biosynthesis. Catalyzes the first committed step in the biosynthesis of AMP from IMP. In Mycobacterium tuberculosis (strain CDC 1551 / Oshkosh), this protein is Adenylosuccinate synthetase.